The following is a 311-amino-acid chain: Methionyl-tRNA formyltransferase (311 aa).

110-113 (SLLP) provides a ligand contact to (6S)-5,6,7,8-tetrahydrofolate.

Belongs to the Fmt family.

The catalysed reaction is L-methionyl-tRNA(fMet) + (6R)-10-formyltetrahydrofolate = N-formyl-L-methionyl-tRNA(fMet) + (6S)-5,6,7,8-tetrahydrofolate + H(+). Its function is as follows. Attaches a formyl group to the free amino group of methionyl-tRNA(fMet). The formyl group appears to play a dual role in the initiator identity of N-formylmethionyl-tRNA by promoting its recognition by IF2 and preventing the misappropriation of this tRNA by the elongation apparatus. This Streptococcus gordonii (strain Challis / ATCC 35105 / BCRC 15272 / CH1 / DL1 / V288) protein is Methionyl-tRNA formyltransferase.